The following is a 1167-amino-acid chain: DNA-directed RNA polymerase subunit beta (1167 aa).

This sequence belongs to the RNA polymerase beta chain family. As to quaternary structure, the RNAP catalytic core consists of 2 alpha, 1 beta, 1 beta' and 1 omega subunit. When a sigma factor is associated with the core the holoenzyme is formed, which can initiate transcription.

It catalyses the reaction RNA(n) + a ribonucleoside 5'-triphosphate = RNA(n+1) + diphosphate. DNA-dependent RNA polymerase catalyzes the transcription of DNA into RNA using the four ribonucleoside triphosphates as substrates. The protein is DNA-directed RNA polymerase subunit beta of Mycolicibacterium vanbaalenii (strain DSM 7251 / JCM 13017 / BCRC 16820 / KCTC 9966 / NRRL B-24157 / PYR-1) (Mycobacterium vanbaalenii).